A 490-amino-acid chain; its full sequence is Bifunctional protein HldE (490 aa).

A ribokinase region spans residues 1–330 (MFDFDDLSQA…RKILPHAYRA (330 aa)). Position 205 to 208 (205 to 208 (NRKE)) interacts with ATP. Residue Asp275 is part of the active site. The cytidylyltransferase stretch occupies residues 358–490 (FTNGCFDILH…LVDRARSDQR (133 aa)).

It in the N-terminal section; belongs to the carbohydrate kinase PfkB family. The protein in the C-terminal section; belongs to the cytidylyltransferase family. Homodimer.

It carries out the reaction D-glycero-beta-D-manno-heptose 7-phosphate + ATP = D-glycero-beta-D-manno-heptose 1,7-bisphosphate + ADP + H(+). The catalysed reaction is D-glycero-beta-D-manno-heptose 1-phosphate + ATP + H(+) = ADP-D-glycero-beta-D-manno-heptose + diphosphate. It functions in the pathway nucleotide-sugar biosynthesis; ADP-L-glycero-beta-D-manno-heptose biosynthesis; ADP-L-glycero-beta-D-manno-heptose from D-glycero-beta-D-manno-heptose 7-phosphate: step 1/4. It participates in nucleotide-sugar biosynthesis; ADP-L-glycero-beta-D-manno-heptose biosynthesis; ADP-L-glycero-beta-D-manno-heptose from D-glycero-beta-D-manno-heptose 7-phosphate: step 3/4. In terms of biological role, catalyzes the phosphorylation of D-glycero-D-manno-heptose 7-phosphate at the C-1 position to selectively form D-glycero-beta-D-manno-heptose-1,7-bisphosphate. Functionally, catalyzes the ADP transfer from ATP to D-glycero-beta-D-manno-heptose 1-phosphate, yielding ADP-D-glycero-beta-D-manno-heptose. The protein is Bifunctional protein HldE of Bradyrhizobium sp. (strain ORS 278).